A 561-amino-acid polypeptide reads, in one-letter code: Solute carrier family 41 member 2 (561 aa).

Topologically, residues methionine 1 to glutamine 150 are extracellular. The helical transmembrane segment at isoleucine 151 to isoleucine 171 threads the bilayer. Residues valine 172–glutamate 183 are Cytoplasmic-facing. The chain crosses the membrane as a helical span at residues valine 184–serine 204. Topologically, residues arginine 205–glutamine 233 are extracellular. Residues valine 234–proline 254 form a helical membrane-spanning segment. Residues aspartate 255–serine 270 are Cytoplasmic-facing. Residues valine 271 to glycine 291 form a helical membrane-spanning segment. The Extracellular segment spans residues serine 292–asparagine 301. Residues valine 302–isoleucine 322 traverse the membrane as a helical segment. Residues serine 323 to tyrosine 333 are Cytoplasmic-facing. A helical transmembrane segment spans residues alanine 334–isoleucine 354. The Extracellular portion of the chain corresponds to alanine 355 to valine 364. Residues leucine 365 to isoleucine 385 form a helical membrane-spanning segment. Residues leucine 386–asparagine 394 are Cytoplasmic-facing. A helical membrane pass occupies residues leucine 395–isoleucine 415. The Extracellular segment spans residues glutamine 416 to alanine 457. A helical transmembrane segment spans residues glutamine 458–methionine 478. The Cytoplasmic portion of the chain corresponds to lysine 479 to proline 487. The chain crosses the membrane as a helical span at residues isoleucine 488 to alanine 508. At aspartate 509–threonine 531 the chain is on the extracellular side. A helical transmembrane segment spans residues alanine 532–isoleucine 552. The Cytoplasmic segment spans residues glycine 553–aspartate 561.

It belongs to the SLC41A transporter family.

The protein localises to the cell membrane. It carries out the reaction Mg(2+)(in) = Mg(2+)(out). It catalyses the reaction Mn(2+)(in) = Mn(2+)(out). The enzyme catalyses Co(2+)(in) = Co(2+)(out). The catalysed reaction is Ni(2+)(in) = Ni(2+)(out). It carries out the reaction Fe(2+)(in) = Fe(2+)(out). Acts as a plasma-membrane magnesium transporter. Can also mediate the transport of other divalent metal cations in an order of Ba(2+) &gt; Ni(2+) &gt; Co(2+) &gt; Fe(2+) &gt; Mn(2+). The chain is Solute carrier family 41 member 2 (slc41a2) from Xenopus laevis (African clawed frog).